The sequence spans 318 residues: NADH-ubiquinone oxidoreductase chain 1 (318 aa).

The next 8 helical transmembrane spans lie at Met1–Leu21, Leu71–Pro91, Leu101–Gly121, Val145–Leu165, His172–Ala192, Phe224–Ile244, Glu253–Ile273, and Leu294–Ile314.

The protein belongs to the complex I subunit 1 family.

The protein resides in the mitochondrion inner membrane. It catalyses the reaction a ubiquinone + NADH + 5 H(+)(in) = a ubiquinol + NAD(+) + 4 H(+)(out). In terms of biological role, core subunit of the mitochondrial membrane respiratory chain NADH dehydrogenase (Complex I) that is believed to belong to the minimal assembly required for catalysis. Complex I functions in the transfer of electrons from NADH to the respiratory chain. The immediate electron acceptor for the enzyme is believed to be ubiquinone. The chain is NADH-ubiquinone oxidoreductase chain 1 (MT-ND1) from Varanus rudicollis (Rough-necked monitor lizard).